A 599-amino-acid chain; its full sequence is Fumarate reductase flavoprotein subunit (599 aa).

FAD-binding positions include glycine 12–glycine 16, valine 36–lysine 38, threonine 44–glycine 52, histidine 156–valine 158, and aspartate 212. Histidine 45 is modified (tele-8alpha-FAD histidine). Residues histidine 233 and arginine 249 contribute to the active site. FAD contacts are provided by residues histidine 357–tyrosine 358, glutamate 381, and arginine 392–leucine 398.

Belongs to the FAD-dependent oxidoreductase 2 family. FRD/SDH subfamily. As to quaternary structure, part of an enzyme complex containing four subunits: a flavoprotein (FrdA), an iron-sulfur protein (FrdB), and two hydrophobic anchor proteins (FrdC and FrdD). The cofactor is FAD.

It is found in the cell inner membrane. The enzyme catalyses a quinone + succinate = fumarate + a quinol. The catalysed reaction is a menaquinone + succinate = a menaquinol + fumarate. This is Fumarate reductase flavoprotein subunit (frdA) from Haemophilus influenzae (strain ATCC 51907 / DSM 11121 / KW20 / Rd).